The sequence spans 1296 residues: Aggregation substance (1296 aa).

Positions 1–43 (MKQQTEVKKRFKMYKAKKHWVVAPILFIGVLGVVGLATDDVQA) are cleaved as a signal peptide. Disordered regions lie at residues 48 to 188 (TQPG…KPAE) and 1221 to 1245 (HTPE…TPQA). The span at 89-99 (KVEEVASEKNG) shows a compositional bias: basic and acidic residues. Composition is skewed to polar residues over residues 100–117 (AEQS…QQPT) and 125–138 (QEQP…TNEP). Residues 160–178 (KEFETPDVDKAVDEAKKDP) are compositionally biased toward basic and acidic residues. The short motif at 1261-1265 (LPQTG) is the LPXTG sorting signal element. Threonine 1264 is modified (pentaglycyl murein peptidoglycan amidated threonine). Positions 1265–1296 (GEKQNVLLTVAGSLAAMLGLAGLGFKRRKETK) are cleaved as a propeptide — removed by sortase.

Belongs to the antigen I/II family.

The protein resides in the secreted. It localises to the cell wall. Its function is as follows. Aggregation substance allows donor and recipient strains to form tight aggregates which allow the non-motile bacteria to maintain physical contact over a period of time sufficient to permit conjugative transfer of the sex pheromone plasmid from donor to recipient strains. The polypeptide is Aggregation substance (asa1) (Enterococcus faecalis (strain ATCC 700802 / V583)).